We begin with the raw amino-acid sequence, 510 residues long: ATP synthase subunit alpha (510 aa).

ATP is bound at residue 169 to 176 (GDRQTGKT).

Belongs to the ATPase alpha/beta chains family. In terms of assembly, F-type ATPases have 2 components, CF(1) - the catalytic core - and CF(0) - the membrane proton channel. CF(1) has five subunits: alpha(3), beta(3), gamma(1), delta(1), epsilon(1). CF(0) has four main subunits: a(1), b(1), b'(1) and c(9-12).

It localises to the cell inner membrane. It catalyses the reaction ATP + H2O + 4 H(+)(in) = ADP + phosphate + 5 H(+)(out). Functionally, produces ATP from ADP in the presence of a proton gradient across the membrane. The alpha chain is a regulatory subunit. This Rhodopseudomonas palustris (strain BisB5) protein is ATP synthase subunit alpha.